The primary structure comprises 378 residues: Lipoyl synthase, mitochondrial (378 aa).

Cysteine 109, cysteine 114, cysteine 120, cysteine 140, cysteine 144, cysteine 147, and serine 356 together coordinate [4Fe-4S] cluster. A Radical SAM core domain is found at 125–345; it reads ETGTATATIM…QTLGMEMGFR (221 aa).

Belongs to the radical SAM superfamily. Lipoyl synthase family. It depends on [4Fe-4S] cluster as a cofactor.

The protein localises to the mitochondrion. It catalyses the reaction [[Fe-S] cluster scaffold protein carrying a second [4Fe-4S](2+) cluster] + N(6)-octanoyl-L-lysyl-[protein] + 2 oxidized [2Fe-2S]-[ferredoxin] + 2 S-adenosyl-L-methionine + 4 H(+) = [[Fe-S] cluster scaffold protein] + N(6)-[(R)-dihydrolipoyl]-L-lysyl-[protein] + 4 Fe(3+) + 2 hydrogen sulfide + 2 5'-deoxyadenosine + 2 L-methionine + 2 reduced [2Fe-2S]-[ferredoxin]. Its pathway is protein modification; protein lipoylation via endogenous pathway; protein N(6)-(lipoyl)lysine from octanoyl-[acyl-carrier-protein]: step 2/2. Catalyzes the radical-mediated insertion of two sulfur atoms into the C-6 and C-8 positions of the octanoyl moiety bound to the lipoyl domains of lipoate-dependent enzymes, thereby converting the octanoylated domains into lipoylated derivatives. This is Lipoyl synthase, mitochondrial from Medicago truncatula (Barrel medic).